Reading from the N-terminus, the 411-residue chain is Serine hydroxymethyltransferase (411 aa).

(6S)-5,6,7,8-tetrahydrofolate is bound by residues Leu119 and 123–125 (GHL). Lys228 bears the N6-(pyridoxal phosphate)lysine mark.

It belongs to the SHMT family. In terms of assembly, homodimer. Requires pyridoxal 5'-phosphate as cofactor.

It localises to the cytoplasm. It catalyses the reaction (6R)-5,10-methylene-5,6,7,8-tetrahydrofolate + glycine + H2O = (6S)-5,6,7,8-tetrahydrofolate + L-serine. It participates in one-carbon metabolism; tetrahydrofolate interconversion. It functions in the pathway amino-acid biosynthesis; glycine biosynthesis; glycine from L-serine: step 1/1. Functionally, catalyzes the reversible interconversion of serine and glycine with tetrahydrofolate (THF) serving as the one-carbon carrier. This reaction serves as the major source of one-carbon groups required for the biosynthesis of purines, thymidylate, methionine, and other important biomolecules. Also exhibits THF-independent aldolase activity toward beta-hydroxyamino acids, producing glycine and aldehydes, via a retro-aldol mechanism. This is Serine hydroxymethyltransferase from Clostridium kluyveri (strain NBRC 12016).